Here is a 1169-residue protein sequence, read N- to C-terminus: Chromosome partition protein Smc (1169 aa).

32–39 (PNGCGKSN) contacts ATP. Coiled-coil stretches lie at residues 170–507 (ISKY…ALGE) and 659–1030 (REQQ…FQSL).

The protein belongs to the SMC family. In terms of assembly, homodimer.

The protein localises to the cytoplasm. Required for chromosome condensation and partitioning. This Coxiella burnetii (strain RSA 493 / Nine Mile phase I) protein is Chromosome partition protein Smc.